The primary structure comprises 358 residues: Protein FAM50 homolog (358 aa).

A compositionally biased stretch (basic and acidic residues) spans Ala-104–Lys-113. A disordered region spans residues Ala-104–Glu-151. The segment covering Asp-122–Glu-137 has biased composition (acidic residues). Positions Gly-138–Glu-151 are enriched in basic and acidic residues.

This sequence belongs to the FAM50 family.

In Anopheles gambiae (African malaria mosquito), this protein is Protein FAM50 homolog.